A 526-amino-acid polypeptide reads, in one-letter code: Inosine-5'-monophosphate dehydrogenase (526 aa).

CBS domains lie at F120 to V179 and M183 to S239. NAD(+) contacts are provided by residues D276–S278 and G326–G328. 2 residues coordinate K(+): G328 and G330. S331 contacts IMP. Residue C333 participates in K(+) binding. The active-site Thioimidate intermediate is the C333. Residues D366–G368 and G389–S390 each bind IMP. R439 serves as the catalytic Proton acceptor. Position 451 (Q451) interacts with IMP. S506 is a K(+) binding site. Residues S506–S526 form a disordered region. A compositionally biased stretch (basic and acidic residues) spans H517 to S526.

It belongs to the IMPDH/GMPR family. As to quaternary structure, homotetramer. It depends on K(+) as a cofactor.

It localises to the cytoplasm. It carries out the reaction IMP + NAD(+) + H2O = XMP + NADH + H(+). Its pathway is secondary metabolite biosynthesis; terpenoid biosynthesis. Its activity is regulated as follows. Mycophenolic acid (MPA) is a non-competitive inhibitor that prevents formation of the closed enzyme conformation by binding to the same site as the amobile flap. In contrast, mizoribine monophosphate (MZP) is a competitive inhibitor that induces the closed conformation. MPA is a potent inhibitor of mammalian IMPDHs but a poor inhibitor of the bacterial enzymes. MZP is a more potent inhibitor of bacterial IMPDH. Functionally, catalyzes the conversion of inosine 5'-phosphate (IMP) to xanthosine 5'-phosphate (XMP), the first committed and rate-limiting step in the de novo synthesis of guanine nucleotides, and therefore plays an important role in the regulation of cell growth. Part of the gene cluster that mediates the biosynthesis of mycophenolic acid (MPA), the first isolated antibiotic natural product in the world. Does not play a role in the biosynthesis of MPA, but is involved in self resistance to MPA, since MPA acts as an inhibitor of IMP dehydrogenases. The sequence is that of Inosine-5'-monophosphate dehydrogenase from Penicillium roqueforti (strain FM164).